The primary structure comprises 647 residues: DNA mismatch repair protein MutL (647 aa).

The disordered stretch occupies residues 375–433 (KQEEPQAVKQPTQLWQPPKQEWQPPQSLVREEQSWQPSTKPIIEEPIQEEKSWDSNEEG). The segment covering 387-400 (QLWQPPKQEWQPPQ) has biased composition (low complexity).

This sequence belongs to the DNA mismatch repair MutL/HexB family.

In terms of biological role, this protein is involved in the repair of mismatches in DNA. It is required for dam-dependent methyl-directed DNA mismatch repair. May act as a 'molecular matchmaker', a protein that promotes the formation of a stable complex between two or more DNA-binding proteins in an ATP-dependent manner without itself being part of a final effector complex. This Bacillus cereus (strain AH820) protein is DNA mismatch repair protein MutL.